We begin with the raw amino-acid sequence, 271 residues long: Bifunctional protein FolD (271 aa).

Residues 154–156 (GRS), Ser181, and Ile222 contribute to the NADP(+) site.

Belongs to the tetrahydrofolate dehydrogenase/cyclohydrolase family. As to quaternary structure, homodimer.

It catalyses the reaction (6R)-5,10-methylene-5,6,7,8-tetrahydrofolate + NADP(+) = (6R)-5,10-methenyltetrahydrofolate + NADPH. The catalysed reaction is (6R)-5,10-methenyltetrahydrofolate + H2O = (6R)-10-formyltetrahydrofolate + H(+). It participates in one-carbon metabolism; tetrahydrofolate interconversion. Functionally, catalyzes the oxidation of 5,10-methylenetetrahydrofolate to 5,10-methenyltetrahydrofolate and then the hydrolysis of 5,10-methenyltetrahydrofolate to 10-formyltetrahydrofolate. The protein is Bifunctional protein FolD of Thermotoga sp. (strain RQ2).